The following is a 1034-amino-acid chain: MIMEELQGSDTPRAGLEMSKRDILRHTKRAWAPLDGHLLPDSEEENPMVTMYVQENSKQESIQQWLDSGFFVSVNENFQQTINHTASLHEQGIIQMTVKDYMRSLHQFSETPTLSRGTSFNSCYSTTGVPQSIPEWLEFWEKDPVEILLDLGFGADEPDICTQIPARFLGYSSAARGINIHVFLEAQKQRMDFENPDLYGRFQQLEILDHVTNAFSSLLDGVKTQQNQHEEKAERQAMQNPSSSGAKEHKRKMSQLLKRASRQTSRMDGNPALSKSCKTEHEIPTLPTKPWDPRVELQVASISHDASQMLPLIECGSAQVHNDLSPCPPLCPPPHALLDKPWPCSCTLAKQSPHTCLSEGSVRRRNWKEKWNHMDRLKNLSHIVSKGPDSFEMEEVQSFEEDTGNPLILTSGIVGTRVDRTNSCQSDSSGFLEELPELQPLQVSSMTGSQSPTVCRGCKPRDQSHSPASQQDSLQESYGSKSKSMTSSSLLSQDWSTLEENASASVVEEELQLKAMEEPPEIVNPDMTLIKTIMVGEHPESVAGPVVTSTSTCNNTMGVLVTHVTEKEDRSVGHKGTRKMLIQRHHFESPRSFRIDQPSDNFYHVDSEITKTEDNCKVCPDTKQSSLVQERPAQHSHQHRGAMPYKGDLVQTSEKSIPHLDKPPGHVPTDSNAASSWSVTTQMSSNLVSAAQRVADLGTYNKGTAFECTPCDPLNTTDLKLQTETRQVKDVAVQTYAHECKLRPSHNDFIHGPRPLAKSISLDTGFPSISATGFCHTIPAHCCVCCHHCPNCQWRRQSPGPEPSICRHSLYSQAEDPKVQFMKTLKILQDTTVRDLCSCTVYEMETMKMVCQSFREHLEEIEQHFMGQQALYPRDMSEEEREEAEYLRTLREALRQQVAELAFQLGDRARQIKEGILLQLDLLCEELPEHCDNLPQCNWTEGKHGQRSCVQTHAVAPDPTLPASSGQWTPCSGMTQPVALSPSHLETRGGISLQSPARAESGPGPSLSHVGEKSLLDQSGFDDLCTKCNVQEQL.

Disordered stretches follow at residues 223–290 (KTQQ…PTKP), 442–486 (QVSS…KSMT), and 624–678 (QSSL…SSWS). Polar residues-rich tracts occupy residues 443–453 (VSSMTGSQSPT) and 465–476 (HSPASQQDSLQE). The span at 477-486 (SYGSKSKSMT) shows a compositional bias: low complexity. Positions 669 to 678 (TDSNAASSWS) are enriched in polar residues. Positions 843–902 (EMETMKMVCQSFREHLEEIEQHFMGQQALYPRDMSEEEREEAEYLRTLREALRQQVAELA) form a coiled coil.

The polypeptide is Protein ITPRID1 (Itprid1) (Mus musculus (Mouse)).